Here is a 1004-residue protein sequence, read N- to C-terminus: Protein CHUP1, chloroplastic (1004 aa).

The segment at 1-25 is required for chloroplast localization; sequence MFVRIGFVVAASIAAVTVKRLNVKP. Residues 22–63 form a disordered region; that stretch reads NVKPSKPSKPSDNGEGGDKEQSVDPDYNLNDKNLQEEEEEEE. Residues 123 to 341 are a coiled coil; the sequence is EMAYNDGELE…KQVEGLQMNR (219 aa). A leucine-zipper 1 region spans residues 269–290; sequence LEVQVMELKRKNRELQHEKREL. 4 disordered regions span residues 398–482, 504–536, 612–718, and 736–755; these read GSER…SMNK, FGQV…GEGL, TATG…GNKV, and SKKE…SSAA. Serine 399 carries the phosphoserine modification. The segment covering 409 to 419 has biased composition (polar residues); that stretch reads ESNYSQPSSPG. Low complexity predominate over residues 427 to 439; the sequence is SMDSSTSRFSSFS. Polar residues-rich tracts occupy residues 504–517 and 612–624; these read FGQV…TPET and TATG…SNES. Over residues 670–706 the composition is skewed to pro residues; sequence ARPPLPGGGPPPPPPPPGGGPPPPPGGGPPPPPPPPG. A compositionally biased stretch (polar residues) spans 744–755; the sequence is LISSGTGNSSAA. The tract at residues 802–823 is leucine-zipper 2; sequence LLAFVSWLDEELSFLVDERAVL. Positions 979 to 1004 are disordered; sequence RSRAKTESGDNNNNNNNNSNEEESVN.

In terms of tissue distribution, expressed in cauline leaves, rosette leaves, stems and flowers, but not in roots.

The protein resides in the plastid. The protein localises to the chloroplast outer membrane. In terms of biological role, required for the positioning and movement of chloroplasts. Interacts with profilin and actin independent of its polymerization status. Regulates chloroplast localization by anchoring chloroplasts to the plasma membrane and forming a bridge to the actin cytoskeleton. In Arabidopsis thaliana (Mouse-ear cress), this protein is Protein CHUP1, chloroplastic (CHUP1).